Reading from the N-terminus, the 322-residue chain is HPr kinase/phosphorylase (322 aa).

Catalysis depends on residues His146 and Lys167. 161-168 lines the ATP pocket; that stretch reads GDSGLGKS. Ser168 serves as a coordination point for Mg(2+). The active-site Proton acceptor; for phosphorylation activity. Proton donor; for dephosphorylation activity is the Asp185. The segment at 209–218 is important for the catalytic mechanism of both phosphorylation and dephosphorylation; it reads LEVRGLGLLD. Glu210 is a binding site for Mg(2+). Residue Arg250 is part of the active site. Positions 271–276 are important for the catalytic mechanism of dephosphorylation; the sequence is QVAAGR.

This sequence belongs to the HPrK/P family. Homohexamer. Mg(2+) is required as a cofactor.

It catalyses the reaction [HPr protein]-L-serine + ATP = [HPr protein]-O-phospho-L-serine + ADP + H(+). The enzyme catalyses [HPr protein]-O-phospho-L-serine + phosphate + H(+) = [HPr protein]-L-serine + diphosphate. Its function is as follows. Catalyzes the ATP- as well as the pyrophosphate-dependent phosphorylation of a specific serine residue in HPr, a phosphocarrier protein of the phosphoenolpyruvate-dependent sugar phosphotransferase system (PTS). HprK/P also catalyzes the pyrophosphate-producing, inorganic phosphate-dependent dephosphorylation (phosphorolysis) of seryl-phosphorylated HPr (P-Ser-HPr). The sequence is that of HPr kinase/phosphorylase from Burkholderia ambifaria (strain ATCC BAA-244 / DSM 16087 / CCUG 44356 / LMG 19182 / AMMD) (Burkholderia cepacia (strain AMMD)).